The sequence spans 491 residues: Galactose-1-phosphate uridylyltransferase (491 aa).

Belongs to the galactose-1-phosphate uridylyltransferase type 2 family.

The protein localises to the cytoplasm. The enzyme catalyses alpha-D-galactose 1-phosphate + UDP-alpha-D-glucose = alpha-D-glucose 1-phosphate + UDP-alpha-D-galactose. Its pathway is carbohydrate metabolism; galactose metabolism. This is Galactose-1-phosphate uridylyltransferase (galT) from Streptococcus mutans serotype c (strain ATCC 700610 / UA159).